A 329-amino-acid chain; its full sequence is Sulfate/thiosulfate import ATP-binding protein CysA (329 aa).

Positions 3–237 constitute an ABC transporter domain; sequence IEIRNVSKNF…PASDFVYHFL (235 aa). An ATP-binding site is contributed by 35-42; sequence GPSGCGKT.

This sequence belongs to the ABC transporter superfamily. Sulfate/tungstate importer (TC 3.A.1.6) family. In terms of assembly, the complex is composed of two ATP-binding proteins (CysA), two transmembrane proteins (CysT and CysW) and a solute-binding protein (CysP).

It is found in the cell inner membrane. It carries out the reaction sulfate(out) + ATP + H2O = sulfate(in) + ADP + phosphate + H(+). The enzyme catalyses thiosulfate(out) + ATP + H2O = thiosulfate(in) + ADP + phosphate + H(+). Its function is as follows. Part of the ABC transporter complex CysAWTP involved in sulfate/thiosulfate import. Responsible for energy coupling to the transport system. The sequence is that of Sulfate/thiosulfate import ATP-binding protein CysA from Pseudomonas aeruginosa (strain ATCC 15692 / DSM 22644 / CIP 104116 / JCM 14847 / LMG 12228 / 1C / PRS 101 / PAO1).